Here is a 329-residue protein sequence, read N- to C-terminus: Transcription factor TGA2.3 (329 aa).

A disordered region spans residues 1 to 48; the sequence is MADMSPRTDTSTDDTDDNHMLEPGQLALAAASDSDRSKDKHEDQKTLR. The span at 33–46 shows a compositional bias: basic and acidic residues; sequence DSDRSKDKHEDQKT. The region spanning 43–87 is the bZIP domain; the sequence is DQKTLRRLAQNREAARKSRLRKKAYVQQLENSRLKLTQLEQELQR. The interval 45 to 65 is basic motif; that stretch reads KTLRRLAQNREAARKSRLRKK. The leucine-zipper stretch occupies residues 71-85; sequence LENSRLKLTQLEQEL. Residues 110–326 enclose the DOG1 domain; the sequence is ALAFDMEYAR…RALSSLWLAR (217 aa).

This sequence belongs to the bZIP family. In terms of assembly, interacts with NPR1/NH1 and NPR3/NH3.

Its subcellular location is the nucleus. In terms of biological role, transcriptional regulator involved in defense response. In Oryza sativa subsp. japonica (Rice), this protein is Transcription factor TGA2.3.